Here is a 455-residue protein sequence, read N- to C-terminus: Adenylosuccinate synthetase isozyme 2 (455 aa).

The tract at residues 1–25 (MSDSGDAQPQDGGNSSSSRGKSPSV) is disordered. The span at 12 to 25 (GGNSSSSRGKSPSV) shows a compositional bias: low complexity. GTP contacts are provided by residues 38–44 (GDEGKGK) and 66–68 (GHT). Aspartate 39 serves as the catalytic Proton acceptor. Aspartate 39 and glycine 66 together coordinate Mg(2+). Aspartate 39 lines the substrate pocket. IMP-binding positions include 39–42 (DEGK), 64–67 (NAGH), threonine 161, arginine 175, asparagine 254, threonine 269, and arginine 333. The Proton donor role is filled by histidine 67. A substrate-binding site is contributed by 329–335 (VTTGRKR). GTP is bound by residues arginine 335, 361 to 363 (KLD), and 443 to 446 (GVGK).

This sequence belongs to the adenylosuccinate synthetase family. As to quaternary structure, homodimer. Mg(2+) serves as cofactor.

It localises to the cytoplasm. The protein resides in the mitochondrion. It catalyses the reaction IMP + L-aspartate + GTP = N(6)-(1,2-dicarboxyethyl)-AMP + GDP + phosphate + 2 H(+). It participates in purine metabolism; AMP biosynthesis via de novo pathway; AMP from IMP: step 1/2. Its activity is regulated as follows. Inhibited competitively by AMP and IMP and non-competitively by fructose 1,6-bisphosphate. Functionally, plays an important role in the de novo pathway and in the salvage pathway of purine nucleotide biosynthesis. Catalyzes the first committed step in the biosynthesis of AMP from IMP. This chain is Adenylosuccinate synthetase isozyme 2 (adss2), found in Danio rerio (Zebrafish).